We begin with the raw amino-acid sequence, 205 residues long: dITP/XTP pyrophosphatase (205 aa).

11–16 contacts substrate; sequence TKNMGK. Glu-44 and Asp-73 together coordinate Mg(2+). The Proton acceptor role is filled by Asp-73. Substrate is bound by residues Ser-74, 158–161, Lys-181, and 186–187; these read FGYD and HR.

This sequence belongs to the HAM1 NTPase family. Homodimer. The cofactor is Mg(2+).

It catalyses the reaction XTP + H2O = XMP + diphosphate + H(+). It carries out the reaction dITP + H2O = dIMP + diphosphate + H(+). The enzyme catalyses ITP + H2O = IMP + diphosphate + H(+). Functionally, pyrophosphatase that catalyzes the hydrolysis of nucleoside triphosphates to their monophosphate derivatives, with a high preference for the non-canonical purine nucleotides XTP (xanthosine triphosphate), dITP (deoxyinosine triphosphate) and ITP. Seems to function as a house-cleaning enzyme that removes non-canonical purine nucleotides from the nucleotide pool, thus preventing their incorporation into DNA/RNA and avoiding chromosomal lesions. The protein is dITP/XTP pyrophosphatase of Bacillus cereus (strain ATCC 14579 / DSM 31 / CCUG 7414 / JCM 2152 / NBRC 15305 / NCIMB 9373 / NCTC 2599 / NRRL B-3711).